Here is a 489-residue protein sequence, read N- to C-terminus: ATF/CREB activator 1 (489 aa).

The 64-residue stretch at 384–447 (AWKRARLLER…QKMKKISRLH (64 aa)) folds into the bZIP domain. A basic motif region spans residues 386–406 (KRARLLERNRIAASKCRQRKK). The tract at residues 412–419 (LQREFDQI) is leucine-zipper.

It belongs to the bZIP family.

The protein localises to the nucleus. Functionally, transcriptional activator of promoters containing ATF/CREB sites. Can independently stimulate transcription through ATF/CREB sites. Important for a variety of biological functions including growth on non-optimal carbon sources. Regulates the expression of COS8. Has efficient silencing blocking activities. This is ATF/CREB activator 1 (ACA1) from Saccharomyces cerevisiae (strain ATCC 204508 / S288c) (Baker's yeast).